The sequence spans 207 residues: High frequency lysogenization protein HflD homolog (207 aa).

Belongs to the HflD family.

Its subcellular location is the cytoplasm. It localises to the cell inner membrane. The sequence is that of High frequency lysogenization protein HflD homolog from Azotobacter vinelandii (strain DJ / ATCC BAA-1303).